Consider the following 86-residue polypeptide: Large ribosomal subunit protein bL27 (86 aa).

Residues 1 to 26 form a disordered region; the sequence is MAHKKAAGSTRNGRDSESKRLGVKRY.

Belongs to the bacterial ribosomal protein bL27 family.

The polypeptide is Large ribosomal subunit protein bL27 (Marinobacter nauticus (strain ATCC 700491 / DSM 11845 / VT8) (Marinobacter aquaeolei)).